A 341-amino-acid polypeptide reads, in one-letter code: L-threonine 3-dehydrogenase (341 aa).

Cysteine 38 contacts Zn(2+). Catalysis depends on charge relay system residues threonine 40 and histidine 43. The Zn(2+) site is built by histidine 63, glutamate 64, cysteine 93, cysteine 96, cysteine 99, and cysteine 107. Residues isoleucine 175, aspartate 195, arginine 200, 262–264 (LGI), and 286–287 (IY) each bind NAD(+).

Belongs to the zinc-containing alcohol dehydrogenase family. Homotetramer. Zn(2+) is required as a cofactor.

The protein localises to the cytoplasm. It carries out the reaction L-threonine + NAD(+) = (2S)-2-amino-3-oxobutanoate + NADH + H(+). Its pathway is amino-acid degradation; L-threonine degradation via oxydo-reductase pathway; glycine from L-threonine: step 1/2. Catalyzes the NAD(+)-dependent oxidation of L-threonine to 2-amino-3-ketobutyrate. This Shewanella sp. (strain ANA-3) protein is L-threonine 3-dehydrogenase.